We begin with the raw amino-acid sequence, 629 residues long: Citrate (Re)-synthase (629 aa).

The Pyruvate carboxyltransferase domain maps to Ile59–Thr329. Residues Val497–Val601 form the Cache domain.

It belongs to the alpha-IPM synthase/homocitrate synthase family. Homotetramer. It depends on Co(2+) as a cofactor. Mn(2+) is required as a cofactor.

It catalyses the reaction oxaloacetate + acetyl-CoA + H2O = citrate + CoA + H(+). Its activity is regulated as follows. Inhibited by p-hydroxymercuribenzoate and EDTA. Its function is as follows. Catalyzes the condensation of the acetyl group of acetyl-CoA with oxaloacetate to form citrate. The polypeptide is Citrate (Re)-synthase (Syntrophus aciditrophicus (strain SB)).